Reading from the N-terminus, the 483-residue chain is BTB/POZ domain and ankyrin repeat-containing protein COCH (483 aa).

Residues 25 to 105 (SDVVFSVEGR…LYSGQVSIVP (81 aa)) enclose the BTB domain. A C2HC NPR-type zinc finger spans residues 111–125 (RPNCGDRGCWHTHCT). Zn(2+) contacts are provided by C114, C119, H121, and C124. ANK repeat units follow at residues 249 to 278 (QKIR…LNLD), 279 to 308 (EALA…DVNF), 313 to 342 (TGKT…DPNV), and 346 to 380 (DGVT…KLRL). Disordered regions lie at residues 395–435 (EEGN…NSNM) and 450–483 (MSTS…SHDY). A compositionally biased stretch (low complexity) spans 398–414 (NNNNNANNNNTGSSATN). The segment covering 456 to 465 (DSGDDDHNSN) has biased composition (basic and acidic residues).

Belongs to the plant 'ANKYRIN-BTB/POZ' family. 'NOOT-BOP-COCH-like' (NBCL) subfamily. In terms of assembly, homodimer.

Its subcellular location is the nucleus. The protein localises to the cytoplasm. It is found in the cell membrane. Its pathway is protein modification; protein ubiquitination. In terms of biological role, may act as a substrate-specific adapter of an E3 ubiquitin-protein ligase complex (CUL3-RBX1-BTB) which mediates the ubiquitination and subsequent proteasomal degradation of target proteins. Transcriptional co-regulator involved in the promotion of leaf and floral meristem fate and determinacy. Promotes normal stipule growth and development. Required for the abscission of senescent organs, probably by regulating the cell wall disorganization in abscission zones (AZs, e.g. pulvini at the base of leaves). Down-regulates UNI expression in primordia of leaves and secondary inflorescences, and thereby controls their sizes and/or structures. Involved in the coordination of the symbiotic nodule developmental program. Promotes the formation of root nodules by interacting directly with APP1 to modulate the expression of the nuclear transcription factor Y subunit (NF-YA1), a key nodulin. Necessary for the robust maintenance of nodule identity throughout the nodule developmental program. This Pisum sativum (Garden pea) protein is BTB/POZ domain and ankyrin repeat-containing protein COCH.